Consider the following 390-residue polypeptide: S-adenosylmethionine synthase 2 (390 aa).

Residue glutamate 9 coordinates Mg(2+). Histidine 15 is an ATP binding site. Glutamate 43 serves as a coordination point for K(+). Residues glutamate 56 and glutamine 99 each coordinate L-methionine. Residues 167–169 (DGK), 235–238 (SGRF), aspartate 246, 252–253 (RK), alanine 269, lysine 273, and lysine 277 each bind ATP. Residue aspartate 246 coordinates L-methionine. Residue lysine 277 coordinates L-methionine.

This sequence belongs to the AdoMet synthase family. In terms of assembly, homotetramer. Requires Mn(2+) as cofactor. It depends on Mg(2+) as a cofactor. The cofactor is Co(2+). K(+) serves as cofactor.

It localises to the cytoplasm. It carries out the reaction L-methionine + ATP + H2O = S-adenosyl-L-methionine + phosphate + diphosphate. It participates in amino-acid biosynthesis; S-adenosyl-L-methionine biosynthesis; S-adenosyl-L-methionine from L-methionine: step 1/1. In terms of biological role, catalyzes the formation of S-adenosylmethionine from methionine and ATP. The reaction comprises two steps that are both catalyzed by the same enzyme: formation of S-adenosylmethionine (AdoMet) and triphosphate, and subsequent hydrolysis of the triphosphate. The sequence is that of S-adenosylmethionine synthase 2 (METK2) from Solanum tuberosum (Potato).